Here is a 561-residue protein sequence, read N- to C-terminus: Oxygen-dependent choline dehydrogenase (561 aa).

FAD is bound at residue 6–35 (DYIIIGAGSAGNVLATRLTEDADVSVLLLE). Residue His-475 is the Proton acceptor of the active site.

The protein belongs to the GMC oxidoreductase family. FAD serves as cofactor.

It carries out the reaction choline + A = betaine aldehyde + AH2. The catalysed reaction is betaine aldehyde + NAD(+) + H2O = glycine betaine + NADH + 2 H(+). Its pathway is amine and polyamine biosynthesis; betaine biosynthesis via choline pathway; betaine aldehyde from choline (cytochrome c reductase route): step 1/1. Involved in the biosynthesis of the osmoprotectant glycine betaine. Catalyzes the oxidation of choline to betaine aldehyde and betaine aldehyde to glycine betaine at the same rate. The polypeptide is Oxygen-dependent choline dehydrogenase (Pseudomonas aeruginosa (strain UCBPP-PA14)).